The primary structure comprises 350 residues: tRNA N6-adenosine threonylcarbamoyltransferase (350 aa).

2 residues coordinate Fe cation: histidine 115 and histidine 119. Residues 137 to 141 (IISGG), aspartate 170, glycine 183, and asparagine 281 each bind substrate. Aspartate 309 provides a ligand contact to Fe cation.

Belongs to the KAE1 / TsaD family. It depends on Fe(2+) as a cofactor.

It is found in the cytoplasm. It catalyses the reaction L-threonylcarbamoyladenylate + adenosine(37) in tRNA = N(6)-L-threonylcarbamoyladenosine(37) in tRNA + AMP + H(+). In terms of biological role, required for the formation of a threonylcarbamoyl group on adenosine at position 37 (t(6)A37) in tRNAs that read codons beginning with adenine. Is involved in the transfer of the threonylcarbamoyl moiety of threonylcarbamoyl-AMP (TC-AMP) to the N6 group of A37, together with TsaE and TsaB. TsaD likely plays a direct catalytic role in this reaction. The chain is tRNA N6-adenosine threonylcarbamoyltransferase from Ehrlichia canis (strain Jake).